The chain runs to 533 residues: CEP295 N-terminal-like protein (533 aa).

Disordered stretches follow at residues 1–40 (MQRD…TTLQ), 84–176 (RSMG…RVTR), 286–333 (LKAD…ETTE), and 370–399 (AGTS…LEDE). Residues 40 to 72 (QQWKARQLQRLAEELKAEWQEARLQQVRQAERL) adopt a coiled-coil conformation. Basic and acidic residues predominate over residues 107 to 126 (KERNRAAFREERGRREEHPR). The stretch at 416–531 (MALRQKQKAE…ARKRLQEFQK (116 aa)) forms a coiled coil.

In terms of tissue distribution, expressed in mature spermatozoa (at protein level). Detected in retina, lung and kidney. In brain, highly expressed in brain-stem, cerebral cortex and thalamus with lesser expression in cerebellum and hippocampus.

The protein resides in the cell projection. Its subcellular location is the cilium. The protein is CEP295 N-terminal-like protein of Mus musculus (Mouse).